The primary structure comprises 198 residues: Ribonuclease HII (198 aa).

The RNase H type-2 domain maps to 10-198 (QLVAGVDEVG…PVKRALGLAS (189 aa)). A divalent metal cation contacts are provided by aspartate 16, glutamate 17, and aspartate 108.

This sequence belongs to the RNase HII family. The cofactor is Mn(2+). Requires Mg(2+) as cofactor.

It is found in the cytoplasm. The enzyme catalyses Endonucleolytic cleavage to 5'-phosphomonoester.. Functionally, endonuclease that specifically degrades the RNA of RNA-DNA hybrids. The chain is Ribonuclease HII from Escherichia coli O45:K1 (strain S88 / ExPEC).